We begin with the raw amino-acid sequence, 314 residues long: Porphobilinogen deaminase (314 aa).

Residue Cys-242 is modified to S-(dipyrrolylmethanemethyl)cysteine.

This sequence belongs to the HMBS family. As to quaternary structure, monomer. Dipyrromethane is required as a cofactor.

It carries out the reaction 4 porphobilinogen + H2O = hydroxymethylbilane + 4 NH4(+). The protein operates within porphyrin-containing compound metabolism; protoporphyrin-IX biosynthesis; coproporphyrinogen-III from 5-aminolevulinate: step 2/4. Functionally, tetrapolymerization of the monopyrrole PBG into the hydroxymethylbilane pre-uroporphyrinogen in several discrete steps. This chain is Porphobilinogen deaminase (hemC), found in Bacillus subtilis (strain 168).